Consider the following 873-residue polypeptide: Rho GTPase-activating protein gacJJ (873 aa).

Residues 64–147 (DEPSSINTSS…NVNNSSNAPT (84 aa)) are disordered. The span at 66–91 (PSSINTSSGNIGSNNNSSSNTPLTGS) shows a compositional bias: low complexity. Residues 103-112 (IGGGGGGGDN) are compositionally biased toward gly residues. Over residues 113–144 (GITNSGNIGSSSNSDLKKSTSSGIVNVNNSSN) the composition is skewed to low complexity. The 102-residue stretch at 301 to 402 (NPVREGYLKK…WTVLPIVIES (102 aa)) folds into the PH domain. One can recognise a Rho-GAP domain in the interval 428-621 (VPIEKTVSGN…SLIRDYQYIF (194 aa)). One can recognise an SH3 domain in the interval 628 to 694 (EQKILAKSLY…PASYVELLPH (67 aa)). Positions 715-761 (MLEMESTKTKNQEIDKNIKQLEITKKELESTINDLENEKAALENDPT) form a coiled coil.

The protein resides in the cytoplasm. In terms of biological role, rho GTPase-activating protein involved in the signal transduction pathway. The chain is Rho GTPase-activating protein gacJJ (gacJJ) from Dictyostelium discoideum (Social amoeba).